Consider the following 188-residue polypeptide: Ribosome-recycling factor (188 aa).

It belongs to the RRF family.

It is found in the cytoplasm. In terms of biological role, responsible for the release of ribosomes from messenger RNA at the termination of protein biosynthesis. May increase the efficiency of translation by recycling ribosomes from one round of translation to another. The chain is Ribosome-recycling factor from Granulibacter bethesdensis (strain ATCC BAA-1260 / CGDNIH1).